A 368-amino-acid chain; its full sequence is D-alanine--D-alanine ligase (368 aa).

One can recognise an ATP-grasp domain in the interval 151 to 358 (KKLLAAEGLP…YGTLVSTLVD (208 aa)). 179–234 (KSRLHLPVFVKPARGGSSIGITRVAEWAALDDAIAHARLHDPKVIVESGIIGREVE) contacts ATP. Mg(2+)-binding residues include Asp313, Glu325, and Asn327.

It belongs to the D-alanine--D-alanine ligase family. It depends on Mg(2+) as a cofactor. The cofactor is Mn(2+).

It is found in the cytoplasm. It catalyses the reaction 2 D-alanine + ATP = D-alanyl-D-alanine + ADP + phosphate + H(+). The protein operates within cell wall biogenesis; peptidoglycan biosynthesis. Functionally, cell wall formation. The polypeptide is D-alanine--D-alanine ligase (Rhodococcus jostii (strain RHA1)).